Reading from the N-terminus, the 658-residue chain is Glycogen debranching enzyme (658 aa).

Aspartate 336 serves as the catalytic Nucleophile. Glutamate 371 functions as the Proton donor in the catalytic mechanism.

The protein belongs to the glycosyl hydrolase 13 family.

It carries out the reaction Hydrolysis of (1-&gt;6)-alpha-D-glucosidic linkages to branches with degrees of polymerization of three or four glucose residues in limit dextrin.. It functions in the pathway glycan degradation; glycogen degradation. Its function is as follows. Removes maltotriose and maltotetraose chains that are attached by 1,6-alpha-linkage to the limit dextrin main chain, generating a debranched limit dextrin. The polypeptide is Glycogen debranching enzyme (Klebsiella pneumoniae (strain 342)).